Reading from the N-terminus, the 121-residue chain is Putative iron-sulfur cluster insertion protein ErpA (121 aa).

Positions 49, 113, and 115 each coordinate iron-sulfur cluster.

It belongs to the HesB/IscA family. As to quaternary structure, homodimer. It depends on iron-sulfur cluster as a cofactor.

Required for insertion of 4Fe-4S clusters. In Nitrosomonas eutropha (strain DSM 101675 / C91 / Nm57), this protein is Putative iron-sulfur cluster insertion protein ErpA.